Reading from the N-terminus, the 556-residue chain is RING finger protein 207 (556 aa).

The RING-type zinc finger occupies 25-64; it reads CPLCHAQYERPCLLDCFHEFCAGCLRGRAADGRLACPLCQ. A B box-type; atypical zinc finger spans residues 93–145; sequence TEVVRCANCDLECGKQDAETTYFCNTCGQPLCARCRDETHRARMFARHDIVAL. The Zn(2+) site is built by cysteine 98, cysteine 101, cysteine 127, and histidine 132. Coiled coils occupy residues 218-273 and 385-425; these read TREA…NKAE and FTEH…SLIK. The disordered stretch occupies residues 517 to 556; the sequence is FQVPVDEPSDHPQNTHDDGVNAEAPARVSTLKPAMEKEVS. Positions 524 to 535 are enriched in basic and acidic residues; the sequence is PSDHPQNTHDDG.

In terms of assembly, interacts with the core-glycosylated, but not the fully glycosylated form of KCNH2/HERG. Interacts with DNAJA1 and HSPA8. Interacts (via the C-terminus) with HSPA1A; this interaction additively increases KCNH2 expression.

It is found in the cytoplasm. Functionally, plays a role in cardiac repolarization possibly by stabilizing membrane expression of the potassium channel KCNH2/HERG, or by assisting its synthesis, folding or export from the endoplasmic reticulum, in a heat shock protein-dependent manner. The chain is RING finger protein 207 (RNF207) from Bos taurus (Bovine).